The primary structure comprises 85 residues: Large ribosomal subunit protein bL27 (85 aa).

The segment at methionine 1–leucine 21 is disordered.

The protein belongs to the bacterial ribosomal protein bL27 family.

This is Large ribosomal subunit protein bL27 from Thermus thermophilus (strain ATCC BAA-163 / DSM 7039 / HB27).